The chain runs to 576 residues: Sulfite reductase [NADPH] hemoprotein beta-component (576 aa).

[4Fe-4S] cluster-binding residues include cysteine 439, cysteine 445, cysteine 485, and cysteine 489. Cysteine 489 is a siroheme binding site.

This sequence belongs to the nitrite and sulfite reductase 4Fe-4S domain family. As to quaternary structure, alpha(8)-beta(8). The alpha component is a flavoprotein, the beta component is a hemoprotein. Siroheme is required as a cofactor. The cofactor is [4Fe-4S] cluster.

It carries out the reaction hydrogen sulfide + 3 NADP(+) + 3 H2O = sulfite + 3 NADPH + 4 H(+). It functions in the pathway sulfur metabolism; hydrogen sulfide biosynthesis; hydrogen sulfide from sulfite (NADPH route): step 1/1. Component of the sulfite reductase complex that catalyzes the 6-electron reduction of sulfite to sulfide. This is one of several activities required for the biosynthesis of L-cysteine from sulfate. This is Sulfite reductase [NADPH] hemoprotein beta-component from Aliivibrio fischeri (strain ATCC 700601 / ES114) (Vibrio fischeri).